Consider the following 76-residue polypeptide: Small, acid-soluble spore protein Tlp (76 aa).

Composition is skewed to basic and acidic residues over residues 1 to 15 (MAKR…ERIE), 26 to 38 (DEAR…HSEE), and 46 to 76 (EIEQ…KNNS). The tract at residues 1–76 (MAKRDDRSNN…DEVNDQKNNS (76 aa)) is disordered.

Belongs to the Tlp family.

The protein resides in the spore core. This Shouchella clausii (strain KSM-K16) (Alkalihalobacillus clausii) protein is Small, acid-soluble spore protein Tlp.